The chain runs to 817 residues: Collagen-like protein 4 (817 aa).

3 Collagen-like domains span residues 83 to 142 (GDTG…KGQD), 145 to 264 (GSKG…KGDD), and 268 to 327 (GIQG…KGLK). Disordered regions lie at residues 87 to 107 (NKGEIGDNGENGDIGQIGDNG), 120 to 458 (FNGS…DKGD), and 479 to 543 (IIGD…KGDI). Residues Asn106 and Asn121 are each glycosylated (N-linked (GlcNAc...) asparagine; by host). Basic and acidic residues-rich tracts occupy residues 126–141 (IKGDKGTDGIKGDKGQ) and 149–161 (QKGETGSKGDDGI). An N-linked (GlcNAc...) asparagine; by host glycan is attached at Asn183. 2 stretches are compositionally biased toward basic and acidic residues: residues 212-224 (IKGDPGNKGEDGI) and 233-245 (SKGETGSKGDDGT). Positions 246-260 (KGITGLKGTKGNSGS) are enriched in low complexity. The segment covering 294–341 (KGSDGDKGNKGLDGIKGDLGDDGIKGDKGIKGLKGDTGNSDKGDKGSK) has biased composition (basic and acidic residues). N-linked (GlcNAc...) asparagine; by host glycosylation is found at Asn345 and Asn360. 2 Collagen-like domains span residues 352–411 (GDKG…KGLV) and 430–489 (GDKG…KGIK). Composition is skewed to basic and acidic residues over residues 354–368 (KGSKGDNGSKGESGD), 377–390 (SKGDIGDKGEKGDL), and 428–458 (SKGDKGESGDKGDIGIKGDKGAKGVTGDKGD). Low complexity predominate over residues 480–494 (IGDNGSKGIKGSSNN). An N-linked (GlcNAc...) asparagine; by host glycan is attached at Asn483. Basic and acidic residues-rich tracts occupy residues 495–504 (KGDKGDKGNT), 515–525 (IKGDKGIKGSK), and 533–543 (EKGEKGTKGDI). The region spanning 512–570 (TKGIKGDKGIKGSKGDLGSVGEKGEKGTKGDIGTKGETGLKGIIGDKGELGSKGIKGLS) is the Collagen-like 6 domain. N-linked (GlcNAc...) asparagine; by host glycans are attached at residues Asn709, Asn712, and Asn715. Gly residues predominate over residues 757–771 (GGGGASAFGNGGRGG). Positions 757–804 (GGGGASAFGNGGRGGNTTQAATKGEYGSGGGGGSEFSPSGSTNGGDGG) are disordered. The N-linked (GlcNAc...) asparagine; by host glycan is linked to Asn772.

Post-translationally, may be hydroxylated on lysine by the viral-encoded procollagen-lysine,2-oxoglutarate 5-dioxygenase.

It localises to the virion. May participate in the formation of a layer of cross-linked glycosylated fibrils at the viral surface thus giving it a hairy-like appearance. The protein is Collagen-like protein 4 of Acanthamoeba polyphaga (Amoeba).